Consider the following 309-residue polypeptide: D-alanine--D-alanine ligase (309 aa).

The region spanning 110-305 (KLCWTGAGLP…FQELVWHILE (196 aa)) is the ATP-grasp domain. Residue 136–191 (RQALGFPVIVKPAEEGSSIGMSRAATAEELAQAWERASGYGCAVFAERWIDGVEYT) coordinates ATP. Residues D259, E272, and N274 each contribute to the Mg(2+) site.

Belongs to the D-alanine--D-alanine ligase family. The cofactor is Mg(2+). Mn(2+) is required as a cofactor.

Its subcellular location is the cytoplasm. It carries out the reaction 2 D-alanine + ATP = D-alanyl-D-alanine + ADP + phosphate + H(+). Its pathway is cell wall biogenesis; peptidoglycan biosynthesis. Cell wall formation. This is D-alanine--D-alanine ligase from Methylococcus capsulatus (strain ATCC 33009 / NCIMB 11132 / Bath).